The sequence spans 505 residues: Katanin p60 ATPase-containing subunit A-like 2 (505 aa).

The 33-residue stretch at 25–57 (RRKNLLILIMHYLLQEGYVDSANSLEQETKISS) folds into the LisH domain. 2 disordered regions span residues 94–127 (LDHDSRVQPKPRSAGKLRRAGSNSTQGLPRIGQQ) and 140–167 (RTNGHQKALSRENSKQESGGNSPQEASE). Polar residues-rich tracts occupy residues 114–127 (GSNSTQGLPRIGQQ) and 155–164 (QESGGNSPQE). 298-305 (GPPGTGKT) serves as a coordination point for ATP.

This sequence belongs to the AAA ATPase family. Katanin p60 subunit A1 subfamily. A-like 2 sub-subfamily.

The protein localises to the cytoplasm. The protein resides in the cytoskeleton. It localises to the spindle. Its subcellular location is the spindle pole. The enzyme catalyses n ATP + n H2O + a microtubule = n ADP + n phosphate + (n+1) alpha/beta tubulin heterodimers.. In terms of biological role, severs microtubules in vitro in an ATP-dependent manner. This activity may promote rapid reorganization of cellular microtubule arrays. This is Katanin p60 ATPase-containing subunit A-like 2 (katnal2) from Xenopus laevis (African clawed frog).